We begin with the raw amino-acid sequence, 171 residues long: MAVLKWKQHRFSTSDDTVSATQLVKQLQHTPSPYSSTVSVGTAKTYGQTSAATRPGHCGLAEKQHCGPVNPLLGAATPTGNNKRRKLCSGNTTPIIHLKGDRNSLKCLRYRLRKHSDHYRDISSTWHWTGAGNEKTGILTVTYHSETQRTKFLNTVAIPDSVQILVGYMTM.

Belongs to the papillomaviridae E8^E2C protein family.

It is found in the host nucleus. Functionally, plays a role in limiting the replication of viral DNA in keratinocytes. Recruits the host NCoR/SMRT complex to viral replication foci to mediate repression of both viral replication and transcription. In Human papillomavirus type 18, this protein is Protein E8^E2C.